The primary structure comprises 162 residues: Interleukin-15 (162 aa).

Positions 1-29 (MRISKPHLRSVSIQCYLCLLLNSHFLTEA) are cleaved as a signal peptide. Residues 30-48 (GIHVFILGCFSAGLPKTEA) constitute a propeptide that is removed on maturation. 2 disulfide bridges follow: C83-C133 and C90-C136. N-linked (GlcNAc...) asparagine glycosylation is present at N127.

This sequence belongs to the IL-15/IL-21 family.

It localises to the secreted. In terms of biological role, cytokine that plays a major role in the development of inflammatory and protective immune responses to microbial invaders and parasites by modulating immune cells of both the innate and adaptive immune systems. Stimulates the proliferation of natural killer cells, T-cells and B-cells and promotes the secretion of several cytokines. In monocytes, induces the production of IL8 and monocyte chemotactic protein 1/CCL2, two chemokines that attract neutrophils and monocytes respectively to sites of infection. Unlike most cytokines, which are secreted in soluble form, IL15 is expressed in association with its high affinity IL15RA on the surface of IL15-producing cells and delivers signals to target cells that express IL2RB and IL2RG receptor subunits. Binding to its receptor triggers the phosphorylation of JAK1 and JAK3 and the recruitment and subsequent phosphorylation of signal transducer and activator of transcription-3/STAT3 and STAT5. In mast cells, induces the rapid tyrosine phosphorylation of STAT6 and thereby controls mast cell survival and release of cytokines such as IL4. The sequence is that of Interleukin-15 (IL15) from Macaca thibetana (Pere David's macaque).